Here is a 478-residue protein sequence, read N- to C-terminus: tRNA modification GTPase MnmE (478 aa).

Positions 36, 94, and 133 each coordinate (6S)-5-formyl-5,6,7,8-tetrahydrofolate. The 173-residue stretch at 230 to 402 (GIHVVLAGRP…LVETLCAKVG (173 aa)) folds into the TrmE-type G domain. Asn-240 is a binding site for K(+). Residues 240 to 245 (NAGKSS), 259 to 265 (TDVAGTT), and 284 to 287 (DTAG) each bind GTP. Mg(2+) is bound at residue Ser-244. Positions 259, 261, and 264 each coordinate K(+). Thr-265 contacts Mg(2+). Lys-478 contacts (6S)-5-formyl-5,6,7,8-tetrahydrofolate.

The protein belongs to the TRAFAC class TrmE-Era-EngA-EngB-Septin-like GTPase superfamily. TrmE GTPase family. In terms of assembly, homodimer. Heterotetramer of two MnmE and two MnmG subunits. The cofactor is K(+).

The protein resides in the cytoplasm. In terms of biological role, exhibits a very high intrinsic GTPase hydrolysis rate. Involved in the addition of a carboxymethylaminomethyl (cmnm) group at the wobble position (U34) of certain tRNAs, forming tRNA-cmnm(5)s(2)U34. This is tRNA modification GTPase MnmE from Psychrobacter arcticus (strain DSM 17307 / VKM B-2377 / 273-4).